The following is a 604-amino-acid chain: Aspartate--tRNA(Asp/Asn) ligase (604 aa).

E175 is an L-aspartate binding site. Positions 199–202 (QQFK) are aspartate. L-aspartate contacts are provided by R221 and H456. Residue 221–223 (RDE) participates in ATP binding. E496 is a binding site for ATP. R503 contributes to the L-aspartate binding site. 548–551 (GVDR) serves as a coordination point for ATP.

The protein belongs to the class-II aminoacyl-tRNA synthetase family. Type 1 subfamily. In terms of assembly, homodimer.

It is found in the cytoplasm. It catalyses the reaction tRNA(Asx) + L-aspartate + ATP = L-aspartyl-tRNA(Asx) + AMP + diphosphate. Its function is as follows. Aspartyl-tRNA synthetase with relaxed tRNA specificity since it is able to aspartylate not only its cognate tRNA(Asp) but also tRNA(Asn). Reaction proceeds in two steps: L-aspartate is first activated by ATP to form Asp-AMP and then transferred to the acceptor end of tRNA(Asp/Asn). In Methylobacterium nodulans (strain LMG 21967 / CNCM I-2342 / ORS 2060), this protein is Aspartate--tRNA(Asp/Asn) ligase.